Consider the following 304-residue polypeptide: Elongation factor Ts (304 aa).

An involved in Mg(2+) ion dislocation from EF-Tu region spans residues 82–85; the sequence is TDFV.

This sequence belongs to the EF-Ts family.

The protein localises to the cytoplasm. Its function is as follows. Associates with the EF-Tu.GDP complex and induces the exchange of GDP to GTP. It remains bound to the aminoacyl-tRNA.EF-Tu.GTP complex up to the GTP hydrolysis stage on the ribosome. The protein is Elongation factor Ts of Symbiobacterium thermophilum (strain DSM 24528 / JCM 14929 / IAM 14863 / T).